Consider the following 93-residue polypeptide: Neutrophil cationic peptide 1 type B (93 aa).

The first 19 residues, 1-19, serve as a signal peptide directing secretion; the sequence is MRTVPLFAACLLLTLMAQA. Residues 20–62 constitute a propeptide that is removed on maturation; it reads EPLPRAADHSDTKMKGDREDHVAVISFWEEESTSLQDAGAGAG. 3 cysteine pairs are disulfide-bonded: Cys65/Cys93, Cys67/Cys82, and Cys72/Cys92.

It belongs to the alpha-defensin family. Bone marrow.

The protein resides in the secreted. In terms of biological role, has antibiotic, anti-fungi and antiviral activity. The polypeptide is Neutrophil cationic peptide 1 type B (Cavia porcellus (Guinea pig)).